A 727-amino-acid chain; its full sequence is ADP-ribosylation factor-binding protein GGA3 (727 aa).

A VHS domain is found at 16–146; that stretch reads ATNPSNRQED…MLKRQGIVQS (131 aa). 2 positions are modified to phosphoserine: Ser-159 and Ser-275. The GAT domain occupies 171-298; the sequence is DEEKSKLLAK…VINSYKTIIE (128 aa). The segment at 299–597 is unstructured hinge; sequence GQIINGEVTT…VHVPLESIKP (299 aa). Residues 334 to 385 form a disordered region; sequence TPSSSSPVLAPAPAPPTSGIPILPPPPQTSGPPRSRSSSQAEAPSGPDSTNN. Over residues 343–363 the composition is skewed to pro residues; the sequence is APAPAPPTSGIPILPPPPQTS. Positions 364–374 are enriched in low complexity; the sequence is GPPRSRSSSQA. The short motif at 391-395 is the DXXLL element; sequence DEELL. The interval 400-419 is disordered; that stretch reads SDPAPTAPKESAGNSPWHLF. Residues 598 to 719 form the GAE domain; that stretch reads SSALPVTAYD…TELGEVDQFP (122 aa).

It belongs to the GGA protein family. Monomer. Interacts with GGA1 and GGA2. Binds to clathrin and activated ARFs, such as ARF1, ARF5 and ARF6. Binds RABEP1 and RABGEF1. Interacts with the membrane proteins M6PR/CD-MPR and IGF2R/CI-MPR and the accessory proteins SYNRG, EPN4, NECAP1, NECAP2 and AFTPH/aftiphilin. Interacts with TSG101 and UBC. Interacts with ADRA2B. Interacts with NTRK1; the interaction is independent of NTRK1 activation and ubiquitination. Interacts (via VHS domain) with BACE1 (via DXXLL motif). Phosphorylated by CK2 and dephosphorylated by PP2A. Phosphorylation of GGA3 allows the internal DXXLL motif to bind the VHS domain and to inhibit the recognition of cargo signals. Post-translationally, ubiquitinated. In terms of processing, proteolytically cleaved during apoptosis by CASP3.

It is found in the golgi apparatus. The protein resides in the trans-Golgi network membrane. Its subcellular location is the endosome membrane. It localises to the early endosome membrane. The protein localises to the recycling endosome membrane. Functionally, plays a role in protein sorting and trafficking between the trans-Golgi network (TGN) and endosomes. Mediates the ARF-dependent recruitment of clathrin to the TGN and binds ubiquitinated proteins and membrane cargo molecules with a cytosolic acidic cluster-dileucine (DXXLL) motif. Mediates export of the GPCR receptor ADRA2B to the cell surface. Involved in BACE1 transport and sorting as well as regulation of BACE1 protein levels. Regulates retrograde transport of BACE1 from endosomes to the trans-Golgi network via interaction through the VHS motif and dependent of BACE1 phosphorylation. Modulates BACE1 protein levels independently of the interaction between VHS domain and DXXLL motif through recognition of ubiquitination. Key player in a novel DXXLL-mediated endosomal sorting machinery to the recycling pathway that targets NTRK1 to the plasma membrane. This chain is ADP-ribosylation factor-binding protein GGA3, found in Rattus norvegicus (Rat).